A 247-amino-acid chain; its full sequence is ABC-type transporter ATP-binding protein EcsA (247 aa).

In terms of domain architecture, ABC transporter spans 4–234 (LSVKDLTGGY…FGMKDAALDD (231 aa)). 36–43 (GLNGAGKS) contributes to the ATP binding site.

The protein belongs to the ABC transporter superfamily.

Has a role in exoprotein production, sporulation and competence. This Bacillus subtilis (strain 168) protein is ABC-type transporter ATP-binding protein EcsA (ecsA).